Reading from the N-terminus, the 356-residue chain is Protein ATP1B4 (356 aa).

At M1–S109 the chain is on the nuclear side. The disordered stretch occupies residues E26–G78. Acidic residues-rich tracts occupy residues A33 to A43 and L51 to G72. The helical; Signal-anchor for type II membrane protein transmembrane segment at L110–I130 threads the bilayer. The Perinuclear space segment spans residues Y131–T356.

The protein belongs to the X(+)/potassium ATPases subunit beta family. In terms of assembly, associates with a SMAD7-transcriptional complex. Interacts with TOR1AIP1. Does not associate with known Na,K-ATPase alpha-subunits. Interacts with SNW1. As to expression, expressed in skeletal muscle (at protein level). Expressed during postnatal development in skeletal muscle and heart.

The protein resides in the nucleus inner membrane. Functionally, may act as a transcriptional coregulator during muscle development through its interaction with SNW1. Has lost its ancestral function as a Na,K-ATPase beta-subunit. This Mus musculus (Mouse) protein is Protein ATP1B4 (Atp1b4).